The sequence spans 606 residues: Putative helicase 172L (606 aa).

Residues 59 to 264 (GEKTWGVRGG…WAQLRFCGYK (206 aa)) form the Helicase ATP-binding domain. ATP is bound at residue 72–79 (LCMGLGKT). Residues 437-586 (YIKSSNFEIS…ASYLEGKERI (150 aa)) form the Helicase C-terminal domain.

The protein belongs to the SNF2/RAD54 helicase family.

The sequence is that of Putative helicase 172L from Invertebrate iridescent virus 6 (IIV-6).